A 463-amino-acid chain; its full sequence is Dopaminechrome tautomerase (463 aa).

This sequence belongs to the major royal jelly protein family.

Its subcellular location is the secreted. The enzyme catalyses dopaminechrome = 5,6-dihydroxyindole. Its pathway is pigment biosynthesis; melanin biosynthesis. Functionally, catalyzes the conversion of dopaminechrome to 5,6-dihydroxyindole in the eumelanin biosynthetic pathway originating from dopamine. Catalyzes tautomerization of dopaminechrome to 5,6-dihydroxyindole during eumelanin biosynthesis. Acts both dopaminechrome and N-methyl dopaminechrome but not on dopachrome or other aminochromes tested. The sequence is that of Dopaminechrome tautomerase from Drosophila melanogaster (Fruit fly).